The chain runs to 657 residues: Pentatricopeptide repeat-containing protein At1g11710, mitochondrial (657 aa).

A mitochondrion-targeting transit peptide spans 1–74 (MFGHVFSRRT…REFRSSPKLA (74 aa)). 14 PPR repeats span residues 147-181 (SPDVFDSLVRACTQNGDAQGAYEVIEQTRAEGFCV), 182-216 (SVHALNNFMGCLLNVNEIDRFWKVYKEMDSLGYVE), 217-251 (NVNTFNLVIYSFCKESKLFEALSVFYRMLKCGVWP), 252-282 (NVVSFNMMIDGACKTGDMRFALQLLGKMGMM), 290-324 (NAVTYNSVINGFCKAGRLDLAERIRGDMVKSGVDC), 325-359 (NERTYGALVDAYGRAGSSDEALRLCDEMTSKGLVV), 360-394 (NTVIYNSIVYWLFMEGDIEGAMSVLRDMNSKNMQI), 395-429 (DRFTQAIVVRGLCRNGYVKEAVEFQRQISEKKLVE), 430-464 (DIVCHNTLMHHFVRDKKLACADQILGSMLVQGLSL), 465-499 (DAISFGTLIDGYLKEGKLERALEIYDGMIKMNKTS), 500-530 (NLVIYNSIVNGLSKRGMAGAAEAVVNAMEIK), 531-565 (DIVTYNTLLNESLKTGNVEEADDILSKMQKQDGEK), 568-602 (SLVTFNIMINHLCKFGSYEKAKEVLKFMVERGVVP), and 603-637 (DSITYGTLITSFSKHRSQEKVVELHDYLILQGVTP).

The protein belongs to the PPR family. P subfamily.

It is found in the mitochondrion. In Arabidopsis thaliana (Mouse-ear cress), this protein is Pentatricopeptide repeat-containing protein At1g11710, mitochondrial.